A 242-amino-acid chain; its full sequence is uncharacterized protein (242 aa).

This is an uncharacterized protein from Aquifex aeolicus (strain VF5).